The sequence spans 129 residues: Photosystem II extrinsic protein V (129 aa).

Heme c is bound by residues Cys35, Cys38, His39, and His90.

Belongs to the cytochrome c family. PsbV subfamily. In terms of assembly, PSII is composed of 1 copy each of membrane proteins PsbA, PsbB, PsbC, PsbD, PsbE, PsbF, PsbH, PsbI, PsbJ, PsbK, PsbL, PsbM, PsbT, PsbX, PsbY, PsbZ, Psb30/Ycf12, peripheral proteins PsbO, CyanoQ (PsbQ), PsbU, PsbV and a large number of cofactors. It forms dimeric complexes. Homodimer in crystal structure. The cofactor is heme c.

The protein localises to the cellular thylakoid membrane. One of the extrinsic, lumenal subunits of photosystem II (PSII). PSII is a light-driven water plastoquinone oxidoreductase, using light energy to abstract electrons from H(2)O, generating a proton gradient subsequently used for ATP formation. The extrinsic proteins stabilize the structure of photosystem II oxygen-evolving complex (OEC), the ion environment of oxygen evolution and protect the OEC against heat-induced inactivation. Low-potential cytochrome c that plays a role in the OEC of PSII. In Limnospira maxima (Arthrospira maxima), this protein is Photosystem II extrinsic protein V.